A 139-amino-acid polypeptide reads, in one-letter code: Histone H2B (139 aa).

Over residues Met1–Pro10 the composition is skewed to basic and acidic residues. Residues Met1 to Lys47 are disordered. An N6-acetyllysine; alternate mark is found at Lys8 and Lys9. Residues Lys8 and Lys9 each participate in a glycyl lysine isopeptide (Lys-Gly) (interchain with G-Cter in SUMO); alternate cross-link. Lys15 is modified (N6-acetyllysine). Residue Lys25 is modified to N6-acetyllysine; alternate. A Glycyl lysine isopeptide (Lys-Gly) (interchain with G-Cter in SUMO); alternate cross-link involves residue Lys25. Lys26 is covalently cross-linked (Glycyl lysine isopeptide (Lys-Gly) (interchain with G-Cter in SUMO)). Lys133 is covalently cross-linked (Glycyl lysine isopeptide (Lys-Gly) (interchain with G-Cter in ubiquitin)).

Belongs to the histone H2B family. In terms of assembly, the nucleosome is a histone octamer containing two molecules each of H2A, H2B, H3 and H4 assembled in one H3-H4 heterotetramer and two H2A-H2B heterodimers. The octamer wraps approximately 147 bp of DNA. Post-translationally, monoubiquitinated by the UBC2-BRE1 complex to form H2BK123ub1. H2BK123ub1 gives a specific tag for epigenetic transcriptional activation and is also prerequisite for H3K4me and H3K79me formation. H2BK123ub1 also modulates the formation of double-strand breaks during meiosis and is a prerequisite for DNA-damage checkpoint activation. Acetylated by GCN5 to form H2BK11ac and H2BK16ac. H2BK16ac can also be formed by ESA1. Acetylation of N-terminal lysines and particularly formation of H2BK11acK16ac has a positive effect on transcription. In terms of processing, sumoylation to form H2BK6su or H2BK7su, and probably also H2BK16su or H2BK17su, occurs preferentially near the telomeres and represses gene transcription.

The protein resides in the nucleus. Its subcellular location is the chromosome. Functionally, core component of nucleosome. Nucleosomes wrap and compact DNA into chromatin, limiting DNA accessibility to the cellular machineries which require DNA as a template. Histones thereby play a central role in transcription regulation, DNA repair, DNA replication and chromosomal stability. DNA accessibility is regulated via a complex set of post-translational modifications of histones, also called histone code, and nucleosome remodeling. This chain is Histone H2B (HTB1), found in Yarrowia lipolytica (strain CLIB 122 / E 150) (Yeast).